The sequence spans 396 residues: Elongation factor Tu (396 aa).

A tr-type G domain is found at 10 to 205 (KSHANIGTIG…AVDEYIPTPE (196 aa)). The G1 stretch occupies residues 19-26 (GHVDHGKT). 19–26 (GHVDHGKT) serves as a coordination point for GTP. Thr-26 lines the Mg(2+) pocket. The G2 stretch occupies residues 61-65 (GITIS). The tract at residues 82 to 85 (DCPG) is G3. GTP is bound by residues 82–86 (DCPGH) and 137–140 (NKCD). A G4 region spans residues 137–140 (NKCD). A G5 region spans residues 175–177 (SAL).

It belongs to the TRAFAC class translation factor GTPase superfamily. Classic translation factor GTPase family. EF-Tu/EF-1A subfamily. As to quaternary structure, monomer.

It localises to the cytoplasm. The enzyme catalyses GTP + H2O = GDP + phosphate + H(+). GTP hydrolase that promotes the GTP-dependent binding of aminoacyl-tRNA to the A-site of ribosomes during protein biosynthesis. This Bacillus velezensis (strain DSM 23117 / BGSC 10A6 / LMG 26770 / FZB42) (Bacillus amyloliquefaciens subsp. plantarum) protein is Elongation factor Tu.